We begin with the raw amino-acid sequence, 321 residues long: Lipoyl synthase (321 aa).

Residues Cys-68, Cys-73, Cys-79, Cys-94, Cys-98, Cys-101, and Ser-308 each coordinate [4Fe-4S] cluster. The Radical SAM core domain occupies 80 to 297 (FNHGTATFMI…KEIALELGFT (218 aa)).

This sequence belongs to the radical SAM superfamily. Lipoyl synthase family. [4Fe-4S] cluster serves as cofactor.

It is found in the cytoplasm. The catalysed reaction is [[Fe-S] cluster scaffold protein carrying a second [4Fe-4S](2+) cluster] + N(6)-octanoyl-L-lysyl-[protein] + 2 oxidized [2Fe-2S]-[ferredoxin] + 2 S-adenosyl-L-methionine + 4 H(+) = [[Fe-S] cluster scaffold protein] + N(6)-[(R)-dihydrolipoyl]-L-lysyl-[protein] + 4 Fe(3+) + 2 hydrogen sulfide + 2 5'-deoxyadenosine + 2 L-methionine + 2 reduced [2Fe-2S]-[ferredoxin]. It participates in protein modification; protein lipoylation via endogenous pathway; protein N(6)-(lipoyl)lysine from octanoyl-[acyl-carrier-protein]: step 2/2. In terms of biological role, catalyzes the radical-mediated insertion of two sulfur atoms into the C-6 and C-8 positions of the octanoyl moiety bound to the lipoyl domains of lipoate-dependent enzymes, thereby converting the octanoylated domains into lipoylated derivatives. This Aliivibrio fischeri (strain ATCC 700601 / ES114) (Vibrio fischeri) protein is Lipoyl synthase.